A 122-amino-acid polypeptide reads, in one-letter code: uncharacterized protein (122 aa).

The protein resides in the mitochondrion. This is an uncharacterized protein from Arabidopsis thaliana (Mouse-ear cress).